Consider the following 345-residue polypeptide: ATP-dependent (S)-NAD(P)H-hydrate dehydratase (345 aa).

A YjeF C-terminal domain is found at 9-332 (ILSLARSMIP…DMVGEVYEEV (324 aa)). Residues Gly113 and 170-176 (NVMEFKR) each bind (6S)-NADPHX. ATP contacts are provided by residues 208–212 (KGPSD) and 241–250 (GGLKRVGGQG). Asp251 is a (6S)-NADPHX binding site.

This sequence belongs to the NnrD/CARKD family. It depends on Mg(2+) as a cofactor.

Its subcellular location is the cytoplasm. The enzyme catalyses (6S)-NADHX + ATP = ADP + phosphate + NADH + H(+). It catalyses the reaction (6S)-NADPHX + ATP = ADP + phosphate + NADPH + H(+). In terms of biological role, catalyzes the dehydration of the S-form of NAD(P)HX at the expense of ATP, which is converted to ADP. Together with NAD(P)HX epimerase, which catalyzes the epimerization of the S- and R-forms, the enzyme allows the repair of both epimers of NAD(P)HX, a damaged form of NAD(P)H that is a result of enzymatic or heat-dependent hydration. The chain is ATP-dependent (S)-NAD(P)H-hydrate dehydratase from Cryptococcus neoformans var. neoformans serotype D (strain JEC21 / ATCC MYA-565) (Filobasidiella neoformans).